Here is a 184-residue protein sequence, read N- to C-terminus: Lysozyme 1 (184 aa).

Residues 1–20 (MNGLILFCAVVFATAVCTYG) form the signal peptide. The I-type lysozyme domain occupies 69–184 (TGMVSQQCLR…WRRVQAQGCN (116 aa)). Disulfide bonds link Cys-76/Cys-152, Cys-81/Cys-87, Cys-92/Cys-101, Cys-114/Cys-134, Cys-124/Cys-130, and Cys-148/Cys-166. Glu-84 functions as the Proton donor in the catalytic mechanism. The active-site Nucleophile is the Asp-95. 107–113 (KRAYWID) provides a ligand contact to substrate. Residues Tyr-138 and 159–161 (HNG) contribute to the substrate site.

In terms of tissue distribution, hemolymph, labial palps, non-vesiculated cells of mantle connective tissue, cells of interlamellar junctions and epithelia surrounding the water tubes of the gills.

The protein localises to the secreted. It carries out the reaction Hydrolysis of (1-&gt;4)-beta-linkages between N-acetylmuramic acid and N-acetyl-D-glucosamine residues in a peptidoglycan and between N-acetyl-D-glucosamine residues in chitodextrins.. Functionally, has antibacterial activity against the Gram-positive bacteria L.garvieae, M.luteus and Enterococcus sp., and the Gram-negative bacteria E.coli and V.vulnificus. Weak antibacterial activity against the Gram-negative bacterium A.hydrophila. No antibacterial activity detected against the Gram-positive bacterium S.iniae or against the Gram-negative bacterium E.ictaluri. Shows some chitinase activity but no isopeptidase activity. The protein is Lysozyme 1 of Crassostrea virginica (Eastern oyster).